Here is a 563-residue protein sequence, read N- to C-terminus: Tripeptidyl-peptidase 1 (563 aa).

A signal peptide spans 1–19 (MGLQACLLGLFALILSGKC). Residues 20–195 (SYSPEPDQRR…PEPQVTGTVG (176 aa)) constitute a propeptide, removed in mature form. A disulfide bridge connects residues Cys-111 and Cys-122. In terms of domain architecture, Peptidase S53 spans 199 to 563 (GVTPSVIRKR…PALLKTLLNP (365 aa)). N-linked (GlcNAc...) asparagine glycosylation is found at Asn-210 and Asn-222. Active-site charge relay system residues include Glu-272 and Asp-276. N-linked (GlcNAc...) asparagine glycosylation is found at Asn-286, Asn-313, and Asn-443. 2 disulfides stabilise this stretch: Cys-365/Cys-526 and Cys-522/Cys-537. The Charge relay system role is filled by Ser-475. Asp-517 and Val-518 together coordinate Ca(2+). Ca(2+) is bound by residues Gly-539, Gly-541, and Asp-543.

In terms of assembly, monomer. Interacts with CLN5. Interacts with CLN3. Ca(2+) is required as a cofactor. In terms of processing, activated by autocatalytic proteolytical processing upon acidification. N-glycosylation is required for processing and activity.

The protein resides in the lysosome. It is found in the melanosome. It catalyses the reaction Release of an N-terminal tripeptide from a polypeptide, but also has endopeptidase activity.. Its function is as follows. Lysosomal serine protease with tripeptidyl-peptidase I activity. May act as a non-specific lysosomal peptidase which generates tripeptides from the breakdown products produced by lysosomal proteinases. Requires substrates with an unsubstituted N-terminus. The sequence is that of Tripeptidyl-peptidase 1 (TPP1) from Pan troglodytes (Chimpanzee).